Consider the following 497-residue polypeptide: UDP-N-acetylmuramoyl-L-alanyl-D-glutamate--2,6-diaminopimelate ligase (497 aa).

Ser32 contacts UDP-N-acetyl-alpha-D-muramoyl-L-alanyl-D-glutamate. Residue 113-119 (GTNGKTT) coordinates ATP. UDP-N-acetyl-alpha-D-muramoyl-L-alanyl-D-glutamate-binding positions include 155–156 (TT), Ser182, Gln188, and Arg190. Lys222 is modified (N6-carboxylysine). Meso-2,6-diaminopimelate-binding positions include Arg385, 409 to 412 (DNPR), Gly460, and Glu464. The Meso-diaminopimelate recognition motif signature appears at 409–412 (DNPR).

The protein belongs to the MurCDEF family. MurE subfamily. The cofactor is Mg(2+). Carboxylation is probably crucial for Mg(2+) binding and, consequently, for the gamma-phosphate positioning of ATP.

The protein localises to the cytoplasm. The enzyme catalyses UDP-N-acetyl-alpha-D-muramoyl-L-alanyl-D-glutamate + meso-2,6-diaminopimelate + ATP = UDP-N-acetyl-alpha-D-muramoyl-L-alanyl-gamma-D-glutamyl-meso-2,6-diaminopimelate + ADP + phosphate + H(+). It participates in cell wall biogenesis; peptidoglycan biosynthesis. Functionally, catalyzes the addition of meso-diaminopimelic acid to the nucleotide precursor UDP-N-acetylmuramoyl-L-alanyl-D-glutamate (UMAG) in the biosynthesis of bacterial cell-wall peptidoglycan. The polypeptide is UDP-N-acetylmuramoyl-L-alanyl-D-glutamate--2,6-diaminopimelate ligase (Thermosynechococcus vestitus (strain NIES-2133 / IAM M-273 / BP-1)).